Here is a 927-residue protein sequence, read N- to C-terminus: Isoleucine--tRNA ligase (927 aa).

Positions 60-70 (PYANGNIHLGH) match the 'HIGH' region motif. Glu557 is a binding site for L-isoleucyl-5'-AMP. The short motif at 598-602 (KMSKS) is the 'KMSKS' region element. Lys601 lines the ATP pocket. Cys895, Cys898, Cys915, and Cys918 together coordinate Zn(2+).

This sequence belongs to the class-I aminoacyl-tRNA synthetase family. IleS type 1 subfamily. As to quaternary structure, monomer. Zn(2+) is required as a cofactor.

It is found in the cytoplasm. It catalyses the reaction tRNA(Ile) + L-isoleucine + ATP = L-isoleucyl-tRNA(Ile) + AMP + diphosphate. In terms of biological role, catalyzes the attachment of isoleucine to tRNA(Ile). As IleRS can inadvertently accommodate and process structurally similar amino acids such as valine, to avoid such errors it has two additional distinct tRNA(Ile)-dependent editing activities. One activity is designated as 'pretransfer' editing and involves the hydrolysis of activated Val-AMP. The other activity is designated 'posttransfer' editing and involves deacylation of mischarged Val-tRNA(Ile). The chain is Isoleucine--tRNA ligase from Syntrophomonas wolfei subsp. wolfei (strain DSM 2245B / Goettingen).